Here is a 103-residue protein sequence, read N- to C-terminus: ATP synthase F(0) complex subunit g, mitochondrial (103 aa).

The residue at position 2 (Ala2) is an N-acetylalanine. N6-acetyllysine occurs at positions 11, 24, 35, and 54.

Belongs to the ATPase g subunit family. Component of the ATP synthase complex composed at least of ATP5F1A/subunit alpha, ATP5F1B/subunit beta, ATP5MC1/subunit c (homooctomer), MT-ATP6/subunit a, MT-ATP8/subunit 8, ATP5ME/subunit e, ATP5MF/subunit f, ATP5MG/subunit g, ATP5MK/subunit k, ATP5MJ/subunit j, ATP5F1C/subunit gamma, ATP5F1D/subunit delta, ATP5F1E/subunit epsilon, ATP5PF/subunit F6, ATP5PB/subunit b, ATP5PD/subunit d, ATP5PO/subunit OSCP. ATP synthase complex consists of a soluble F(1) head domain (subunits alpha(3) and beta(3)) - the catalytic core - and a membrane F(0) domain - the membrane proton channel (subunits c, a, 8, e, f, g, k and j). These two domains are linked by a central stalk (subunits gamma, delta, and epsilon) rotating inside the F1 region and a stationary peripheral stalk (subunits F6, b, d, and OSCP).

It localises to the mitochondrion. It is found in the mitochondrion inner membrane. In terms of biological role, subunit g, of the mitochondrial membrane ATP synthase complex (F(1)F(0) ATP synthase or Complex V) that produces ATP from ADP in the presence of a proton gradient across the membrane which is generated by electron transport complexes of the respiratory chain. ATP synthase complex consist of a soluble F(1) head domain - the catalytic core - and a membrane F(1) domain - the membrane proton channel. These two domains are linked by a central stalk rotating inside the F(1) region and a stationary peripheral stalk. During catalysis, ATP synthesis in the catalytic domain of F(1) is coupled via a rotary mechanism of the central stalk subunits to proton translocation. In vivo, can only synthesize ATP although its ATP hydrolase activity can be activated artificially in vitro. Part of the complex F(0) domain. This is ATP synthase F(0) complex subunit g, mitochondrial from Mus musculus (Mouse).